The following is a 248-amino-acid chain: Protein FAM133A (248 aa).

Residues 68–80 (NWKKELEKSREKL) are compositionally biased toward basic and acidic residues. Residues 68–248 (NWKKELEKSR…KKSGSSHKSR (181 aa)) are disordered. Residues 90 to 102 (KRERKKKRKKKSC) show a composition bias toward basic residues. Positions 103 to 118 (RSSSSSSSSDSSSSSS) are enriched in low complexity. The segment covering 127 to 138 (QGKRRKKKKNRS) has biased composition (basic residues). Composition is skewed to basic and acidic residues over residues 147–156 (HESESESKES), 163–175 (SKDE…DVRS), and 211–220 (RCEEREQAKE). A compositionally biased stretch (basic residues) spans 221–248 (KVKKKKKKQHKKHSKKKKKKSGSSHKSR).

Belongs to the FAM133 family.

This is Protein FAM133A (FAM133A) from Homo sapiens (Human).